The following is a 1069-amino-acid chain: Cellulose synthase A catalytic subunit 5 [UDP-forming] (1069 aa).

The residue at position 1 (methionine 1) is an N-acetylmethionine. Residues 1 to 265 lie on the Cytoplasmic side of the membrane; it reads MNTGGRLIAG…KSSKINPYRM (265 aa). Cysteine 39, cysteine 42, cysteine 58, cysteine 61, cysteine 66, cysteine 69, cysteine 81, and cysteine 84 together coordinate Zn(2+). The RING-type; degenerate zinc finger occupies 39 to 85; it reads CQICGDEIELSVDGESFVACNECAFPVCRPCYEYERREGNQSCPQCK. Serine 229 and serine 230 each carry phosphoserine. The chain crosses the membrane as a helical span at residues 266-286; that stretch reads LIVLRLVILGLFFHYRILHPV. Over 287–288 the chain is Extracellular; sequence ND. Residues 289-309 traverse the membrane as a helical segment; it reads AYALWLISVICEIWFAVSWVL. The Cytoplasmic portion of the chain corresponds to 310–853; it reads DQFPKWYPIE…INSVVYPWTS (544 aa). UDP-alpha-D-glucose contacts are provided by serine 348, lysine 354, glutamate 355, and aspartate 384. The active site involves aspartate 384. A coiled-coil region spans residues 438 to 464; it reads VRERRAMKRDYEEFKVKINALVATAQK. Position 525 (lysine 525) interacts with UDP-alpha-D-glucose. Mn(2+) is bound by residues lysine 526 and aspartate 550. Aspartate 770 is a catalytic residue. A helical transmembrane segment spans residues 854-874; the sequence is IPLLVYCSLPAICLLTGKFIV. Over 875-879 the chain is Extracellular; it reads PEISN. The chain crosses the membrane as a helical span at residues 880–900; sequence YASILFMALFGSIAVTGILEM. Over 901–915 the chain is Cytoplasmic; the sequence is QWGKVGIDDWWRNEQ. Residues 916-936 traverse the membrane as a helical segment; the sequence is FWVIGGVSAHLFALFQGLLKV. At 937–965 the chain is on the extracellular side; that stretch reads LAGVETNFTVTSKAADDGEFSELYIFKWT. N-linked (GlcNAc...) asparagine glycosylation is present at asparagine 943. A helical membrane pass occupies residues 966–986; the sequence is SLLIPPTTLLIINVIGVIVGI. The Cytoplasmic segment spans residues 987 to 997; it reads SDAISNGYDSW. A helical transmembrane segment spans residues 998-1018; the sequence is GPLFGRLFFAFWVILHLYPFL. The Extracellular segment spans residues 1019 to 1027; it reads KGLLGKQDR. A helical transmembrane segment spans residues 1028-1048; the sequence is MPTIILVWSILLASILTLLWV. Residues 1049-1069 lie on the Cytoplasmic side of the membrane; sequence RVNPFVAKGGPILEICGLDCL.

This sequence belongs to the glycosyltransferase 2 family. Plant cellulose synthase subfamily. Zn(2+) is required as a cofactor. The cofactor is Mn(2+). As to expression, expressed in young plants, stems and flowers.

It is found in the cell membrane. The catalysed reaction is [(1-&gt;4)-beta-D-glucosyl](n) + UDP-alpha-D-glucose = [(1-&gt;4)-beta-D-glucosyl](n+1) + UDP + H(+). Its pathway is glycan metabolism; plant cellulose biosynthesis. Functionally, catalytic subunit of cellulose synthase terminal complexes ('rosettes'), required for beta-1,4-glucan microfibril crystallization, a major mechanism of the cell wall formation. This is Cellulose synthase A catalytic subunit 5 [UDP-forming] from Arabidopsis thaliana (Mouse-ear cress).